We begin with the raw amino-acid sequence, 286 residues long: CBY1-interacting BAR domain-containing protein 1 (286 aa).

A mitochondrion-targeting transit peptide spans 1–47 (MLRRNLDERDAQTKQLQDAVTNVEKHFGELCQIFAAYVRKTARLRDK). The interval 10–220 (DAQTKQLQDA…NIDEDEDLEV (211 aa)) is BAR-like. Positions 107 to 178 (KMKRDDLKAT…IDNFEKQKIK (72 aa)) form a coiled coil. Residues 258–286 (GQISTCRTRKDQQVEDEDDEELDVTEDEN) are disordered. The segment covering 271-286 (VEDEDDEELDVTEDEN) has biased composition (acidic residues).

Belongs to the CIBAR family. Homodimer (via BAR-like domain). Heterodimer with FAM92B (via BAR-like domains). Interacts (via BAR-like domain) with CBY1; this interaction is required for targeting FAM92A to centriole and cilium basal body. Interacts (via BAR-like domain) with CBY3; both proteins form a ninefold symmetric structure at the flagellar base; are recruited to the annulus in a mutually dependent manner and regulate annulus positionning. As to expression, expressed in the heart, liver, spleen, lung, kidney, brain and muscle (at protein level). Strongly expressed throughout the developing limb bud, including the progress zone and the apical ectodermal ridge.

The protein localises to the cytoplasm. It localises to the cytoskeleton. It is found in the microtubule organizing center. Its subcellular location is the centrosome. The protein resides in the centriole. The protein localises to the cilium basal body. It localises to the cell projection. It is found in the cilium. Its subcellular location is the nucleus. The protein resides in the mitochondrion inner membrane. The protein localises to the flagellum. Plays a critical role in regulating mitochondrial ultrastructure and function by maintaining the integrity of mitochondrial morphology, particularly the organization of cristae. Preferentially binds to negatively charged phospholipids like cardiolipin and phosphatidylinositol 4,5-bisphosphate enhancing its interaction with mitochondrial membranes. Induces membrane curvature and tubulation, which are critical for maintaining mitochondrial ultrastructure and the organization of cristae. Plays a crucial role in ciliogenesis. May play a role in limb development through its role in ciliogenesis. Plays a key role in the correct positioning of the annulus, a septin-based ring structure in the sperm flagellum, serving both as a physical barrier and a membrane diffusion barrier that separates the midpiece (MP) from the principal piece (PP). This positioning is essential for proper sperm motility and function. Interacts with CBY3 to form a complex which localizes to the curved membrane region of the flagellar pocket. By doing so, may provide stability and rigidity to the periannular membrane to prevent membrane deformation. This function is crucial for halting annulus migration at the proximal end of the fibrous sheath-containing PP. This is CBY1-interacting BAR domain-containing protein 1 from Mus musculus (Mouse).